The sequence spans 103 residues: Small ribosomal subunit protein uS10 (103 aa).

This sequence belongs to the universal ribosomal protein uS10 family. Part of the 30S ribosomal subunit.

Its function is as follows. Involved in the binding of tRNA to the ribosomes. This Methylibium petroleiphilum (strain ATCC BAA-1232 / LMG 22953 / PM1) protein is Small ribosomal subunit protein uS10.